A 112-amino-acid chain; its full sequence is MNNYETVFILNPVLSDEQIKETVKKYEDFLVSKGAEMVAKEDWGLRKLAYAIQHKKSGFYHLFEYKAPGDAIEPLELEFRREERMMRYLTVKLDKHAIAWAEKRRKRNKEKA.

Belongs to the bacterial ribosomal protein bS6 family.

Binds together with bS18 to 16S ribosomal RNA. This Christiangramia forsetii (strain DSM 17595 / CGMCC 1.15422 / KT0803) (Gramella forsetii) protein is Small ribosomal subunit protein bS6.